Reading from the N-terminus, the 449-residue chain is Lipase (449 aa).

Positions Met-1 to Ala-23 are cleaved as a signal peptide. The disordered stretch occupies residues Arg-58–Lys-77. Ser-206 serves as the catalytic Charge relay system. 3 residues coordinate Ca(2+): Gly-318, Asp-387, and Asp-396. Hemolysin-type calcium-binding repeat units follow at residues Ile-372–Ile-389 and Glu-390–Phe-407.

The protein belongs to the AB hydrolase superfamily. Lipase family.

The catalysed reaction is a triacylglycerol + H2O = a diacylglycerol + a fatty acid + H(+). The protein is Lipase of Pseudomonas fluorescens.